The chain runs to 293 residues: Ribonuclease H2 subunit B (293 aa).

Residues 251–278 are disordered; it reads KRPQNSDITSSLLKKPNRKQATKKSKYF. A compositionally biased stretch (basic residues) spans 265 to 276; that stretch reads KPNRKQATKKSK.

This sequence belongs to the RNase H2 subunit B family. Component of the RNase H2 complex.

It is found in the nucleus. The protein resides in the cytoplasm. In terms of biological role, non catalytic subunit of RNase H2, an endonuclease that specifically degrades the RNA of RNA:DNA hybrids. Participates in DNA replication, possibly by mediating the removal of lagging-strand Okazaki fragment RNA primers during DNA replication. Mediates the excision of single ribonucleotides from DNA:RNA duplexes. The chain is Ribonuclease H2 subunit B (rnh202) from Schizosaccharomyces pombe (strain 972 / ATCC 24843) (Fission yeast).